Reading from the N-terminus, the 680-residue chain is DNA-directed RNA polymerase subunit beta' (680 aa).

Residues Cys-69, Cys-71, Cys-87, and Cys-90 each coordinate Zn(2+). Positions 489, 491, and 493 each coordinate Mg(2+).

It belongs to the RNA polymerase beta' chain family. RpoC1 subfamily. In plastids the minimal PEP RNA polymerase catalytic core is composed of four subunits: alpha, beta, beta', and beta''. When a (nuclear-encoded) sigma factor is associated with the core the holoenzyme is formed, which can initiate transcription. The cofactor is Mg(2+). Zn(2+) is required as a cofactor.

Its subcellular location is the plastid. It localises to the chloroplast. It carries out the reaction RNA(n) + a ribonucleoside 5'-triphosphate = RNA(n+1) + diphosphate. Functionally, DNA-dependent RNA polymerase catalyzes the transcription of DNA into RNA using the four ribonucleoside triphosphates as substrates. The sequence is that of DNA-directed RNA polymerase subunit beta' from Ceratophyllum demersum (Rigid hornwort).